The sequence spans 294 residues: StAR-related lipid transfer protein 3 (294 aa).

The region spanning 1–66 (DGYICNNGMD…YSPPESLAGS (66 aa)) is the MENTAL domain. An FFAT motif is present at residues 55–61 (QFYSPPE). A disordered region spans residues 58–77 (SPPESLAGSEEDLDEEGLGR). The START domain occupies 79–292 (AVSPQEKALV…LRQRIRDLRS (214 aa)).

It belongs to the STARD3 family. In terms of assembly, homodimer. Post-translationally, phosphorylated. Phosphorylation allows the tethering of two membranes that participates in the formation of ER-endosome contacts. Phosphorylation of FFAT motif drives membrane tethering between the endoplasmic reticulum and late endosomes that in turn allows the efficient transport of sterol mediated by the START domain.

The protein resides in the late endosome membrane. The enzyme catalyses cholesterol(in) = cholesterol(out). Sterol-binding protein that mediates cholesterol transport from the endoplasmic reticulum to endosomes. The sterol transport mechanism is triggered by phosphorylation of FFAT motif that leads to membrane tethering between the endoplasmic reticulum and late endosomes. Acts as a lipid transfer protein that redirects sterol to the endosome at the expense of the cell membrane and favors membrane formation inside endosomes. This is StAR-related lipid transfer protein 3 from Salvelinus fontinalis (Brook trout).